Reading from the N-terminus, the 385-residue chain is MKNILIGIVAGEASGDFLGAELIKSLNIIHSNIKFVGIAGPLMLKEKNVESWFSIEELSIMGIFEIINRIPKILNIRNKIFNRLSFLKPDLFIGIDSPEFNIHLEFKLKKNGIKIIHYVSPSIWAWRKSRIFKIKESVDKVLALLPFEKKIYDDFNIPCKFVGHPLADKIPLYPDKYSIRSNLEIDKNSVCLALLPGSRLTEINLLSKKFLYAAKIIKKNIFNLKILVPMVNSLLKKRFEEIKREVAPDLPITIFDNFSYEVMACSDFSIVTSGTATLECMLSKCPMVVGYCMKKINFFLLKKIIKINYISLPNLIAGKKIVPEKIQNECNPEVLAKEILIIFNDKKKYKKTKKIFYKLHKKIRCNSSYNAACSASCLINKLTIK.

This sequence belongs to the LpxB family.

The catalysed reaction is 2-N,3-O-bis[(3R)-3-hydroxytetradecanoyl]-alpha-D-glucosaminyl 1-phosphate + UDP-2-N,3-O-bis[(3R)-3-hydroxytetradecanoyl]-alpha-D-glucosamine = lipid A disaccharide (E. coli) + UDP + H(+). It carries out the reaction a lipid X + a UDP-2-N,3-O-bis[(3R)-3-hydroxyacyl]-alpha-D-glucosamine = a lipid A disaccharide + UDP + H(+). The protein operates within glycolipid biosynthesis; lipid IV(A) biosynthesis; lipid IV(A) from (3R)-3-hydroxytetradecanoyl-[acyl-carrier-protein] and UDP-N-acetyl-alpha-D-glucosamine: step 5/6. Condensation of UDP-2,3-diacylglucosamine and 2,3-diacylglucosamine-1-phosphate to form lipid A disaccharide, a precursor of lipid A, a phosphorylated glycolipid that anchors the lipopolysaccharide to the outer membrane of the cell. This Wigglesworthia glossinidia brevipalpis protein is Lipid-A-disaccharide synthase.